The sequence spans 313 residues: Porphobilinogen deaminase (313 aa).

Position 242 is an S-(dipyrrolylmethanemethyl)cysteine (C242).

It belongs to the HMBS family. As to quaternary structure, monomer. Requires dipyrromethane as cofactor.

It catalyses the reaction 4 porphobilinogen + H2O = hydroxymethylbilane + 4 NH4(+). The protein operates within porphyrin-containing compound metabolism; protoporphyrin-IX biosynthesis; coproporphyrinogen-III from 5-aminolevulinate: step 2/4. Tetrapolymerization of the monopyrrole PBG into the hydroxymethylbilane pre-uroporphyrinogen in several discrete steps. The chain is Porphobilinogen deaminase from Pectobacterium atrosepticum (strain SCRI 1043 / ATCC BAA-672) (Erwinia carotovora subsp. atroseptica).